An 873-amino-acid polypeptide reads, in one-letter code: Bifunctional uridylyltransferase/uridylyl-removing enzyme (873 aa).

Residues 1 to 332 (MAFQSPLTFN…NGGETEPAVI (332 aa)) form a uridylyltransferase region. The uridylyl-removing stretch occupies residues 333–692 (INEDFQRRGR…MSKKATRGGT (360 aa)). One can recognise an HD domain in the interval 451–573 (VDEHSVRLLN…VRDEERLEYL (123 aa)). ACT domains lie at 693 to 773 (EVFV…VKTR) and 800 to 873 (LMEL…ELAP).

Belongs to the GlnD family. The cofactor is Mg(2+).

It carries out the reaction [protein-PII]-L-tyrosine + UTP = [protein-PII]-uridylyl-L-tyrosine + diphosphate. The enzyme catalyses [protein-PII]-uridylyl-L-tyrosine + H2O = [protein-PII]-L-tyrosine + UMP + H(+). Its activity is regulated as follows. Uridylyltransferase (UTase) activity is inhibited by glutamine, while glutamine activates uridylyl-removing (UR) activity. In terms of biological role, modifies, by uridylylation and deuridylylation, the PII regulatory proteins (GlnB and homologs), in response to the nitrogen status of the cell that GlnD senses through the glutamine level. Under low glutamine levels, catalyzes the conversion of the PII proteins and UTP to PII-UMP and PPi, while under higher glutamine levels, GlnD hydrolyzes PII-UMP to PII and UMP (deuridylylation). Thus, controls uridylylation state and activity of the PII proteins, and plays an important role in the regulation of nitrogen assimilation and metabolism. In Vibrio vulnificus (strain CMCP6), this protein is Bifunctional uridylyltransferase/uridylyl-removing enzyme.